Reading from the N-terminus, the 179-residue chain is MSRIGKLPVKFSEKVTMKIDQDNIIVKGPKGELALGLSKNINITIENNTLFVKPVTKEPQVLKLFGTYRAIINNMVVGVTKGFEKRLELQGVGYRAQLQGKDLSLSVGYSHPVVIKAPTGINIAVENNTIVIISGISKELVGQIASNIRSIKPPEPYKGKGIRYVGEFVRKKAGKAGKK.

It belongs to the universal ribosomal protein uL6 family. Part of the 50S ribosomal subunit.

Its subcellular location is the plastid. It localises to the chloroplast. In terms of biological role, binds 23S rRNA. This is Large ribosomal subunit protein uL6c (rpl6) from Guillardia theta (Cryptophyte).